A 244-amino-acid polypeptide reads, in one-letter code: MGKRPLVRRRGRGGNQFRSTSTGKVGTKANYPRFPLSEQHEGEIIDLVHERGREAPLAKVRFEDGSVSFVPAVLGAKVGETLQFGLKSKIEKGNVISIQNIPDGTIVCNIEKHFGDGGAIVKSAGTDATVFSHGDEGVTVKLPSGKFTTLNPKNRAMIGTLAGGGASERPFMSAGGKWRNFKAKGKKYPIVRGVAQAAYVHPHGGGRHQHVGQSSTVSRDTPPGAKVGSIAARKTGRARIKERK.

2 stretches are compositionally biased toward basic residues: residues 1–12 (MGKRPLVRRRGR) and 234–244 (KTGRARIKERK). 2 disordered regions span residues 1–30 (MGKR…TKAN) and 203–244 (HGGG…KERK).

Belongs to the universal ribosomal protein uL2 family. In terms of assembly, part of the 50S ribosomal subunit. Forms a bridge to the 30S subunit in the 70S ribosome.

One of the primary rRNA binding proteins. Required for association of the 30S and 50S subunits to form the 70S ribosome, for tRNA binding and peptide bond formation. It has been suggested to have peptidyltransferase activity; this is somewhat controversial. Makes several contacts with the 16S rRNA in the 70S ribosome. The polypeptide is Large ribosomal subunit protein uL2 (Nitrosopumilus maritimus (strain SCM1)).